The primary structure comprises 1407 residues: DNA-directed RNA polymerase subunit beta' (1407 aa).

Residues Cys70, Cys72, Cys85, and Cys88 each contribute to the Zn(2+) site. Mg(2+) contacts are provided by Asp460, Asp462, and Asp464. Zn(2+)-binding residues include Cys814, Cys888, Cys895, and Cys898.

Belongs to the RNA polymerase beta' chain family. In terms of assembly, the RNAP catalytic core consists of 2 alpha, 1 beta, 1 beta' and 1 omega subunit. When a sigma factor is associated with the core the holoenzyme is formed, which can initiate transcription. Mg(2+) is required as a cofactor. Zn(2+) serves as cofactor.

The catalysed reaction is RNA(n) + a ribonucleoside 5'-triphosphate = RNA(n+1) + diphosphate. Functionally, DNA-dependent RNA polymerase catalyzes the transcription of DNA into RNA using the four ribonucleoside triphosphates as substrates. The protein is DNA-directed RNA polymerase subunit beta' of Pectobacterium atrosepticum (strain SCRI 1043 / ATCC BAA-672) (Erwinia carotovora subsp. atroseptica).